A 162-amino-acid polypeptide reads, in one-letter code: GTP-dependent dephospho-CoA kinase (162 aa).

Aspartate 40, valine 41, valine 42, aspartate 59, lysine 61, and glutamate 111 together coordinate GTP.

Belongs to the GTP-dependent DPCK family.

It catalyses the reaction 3'-dephospho-CoA + GTP = GDP + CoA + H(+). It functions in the pathway cofactor biosynthesis; coenzyme A biosynthesis. Functionally, catalyzes the GTP-dependent phosphorylation of the 3'-hydroxyl group of dephosphocoenzyme A to form coenzyme A (CoA). This is GTP-dependent dephospho-CoA kinase from Sulfurisphaera tokodaii (strain DSM 16993 / JCM 10545 / NBRC 100140 / 7) (Sulfolobus tokodaii).